The primary structure comprises 198 residues: Nucleoid occlusion factor SlmA (198 aa).

Positions 10–70 (NRREEILQSL…SLIEFIEDSL (61 aa)) constitute an HTH tetR-type domain. Residues 33 to 52 (TTAKLAASVGVSEAALYRHF) constitute a DNA-binding region (H-T-H motif). Residues 117 to 145 (EQDKLQGRINQLFERIEAQLRQVLREKKM) are a coiled coil.

It belongs to the nucleoid occlusion factor SlmA family. Homodimer. Interacts with FtsZ.

The protein localises to the cytoplasm. It localises to the nucleoid. Required for nucleoid occlusion (NO) phenomenon, which prevents Z-ring formation and cell division over the nucleoid. Acts as a DNA-associated cell division inhibitor that binds simultaneously chromosomal DNA and FtsZ, and disrupts the assembly of FtsZ polymers. SlmA-DNA-binding sequences (SBS) are dispersed on non-Ter regions of the chromosome, preventing FtsZ polymerization at these regions. This chain is Nucleoid occlusion factor SlmA, found in Enterobacter sp. (strain 638).